A 203-amino-acid chain; its full sequence is Inositol diphosphatase DSP3 (203 aa).

The Tyrosine-protein phosphatase domain occupies 20–169; that stretch reads NFSMVEDGIY…FDIVSLRQCL (150 aa). The segment at 76 to 88 is WPD loop important for active site topology; sequence FGIEGKTDPPTPM. Cys-112 (phosphocysteine intermediate) is an active-site residue.

This sequence belongs to the protein-tyrosine phosphatase family. Atypical dual-specificity phosphatase Siw14-like subfamily. Interacts with FLZ1. Highly expressed in roots, stems and flowers. Expressed at low levels in leaves and siliques.

It localises to the nucleus. The catalysed reaction is 5-diphospho-1D-myo-inositol 1,2,3,4,6-pentakisphosphate + H2O = 1D-myo-inositol hexakisphosphate + phosphate + H(+). It carries out the reaction 1,5-bis(diphospho)-1D-myo-inositol 2,3,4,6-tetrakisphosphate + H2O = 1-diphospho-1D-myo-inositol 2,3,4,5,6-pentakisphosphate + phosphate + 2 H(+). The enzyme catalyses 3,5-bis(diphospho)-1D-myo-inositol 1,2,4,6-tetrakisphosphate + H2O = 3-diphospho-1D-myo-inositol 1,2,4,5,6-pentakisphosphate + phosphate + 2 H(+). It catalyses the reaction 6-diphospho-1D-myo-inositol pentakisphosphate + H2O = 1D-myo-inositol hexakisphosphate + phosphate + H(+). In terms of biological role, cleaves the beta-phosphate at the 5-position of soluble inositol pyrophosphates. Has highest activity on 5-diphosphoinositol 1,2,3,4,6-pentakisphosphate (5-InsP(7)), 1,5-bis-diphosphoinositol 2,3,4,6-tetrakisphosphate (1,5-InsP(8)) and 3,5-InsP(8). Possesses phosphotyrosine phosphatase activity in vitro. Dephosphorylates the phosphoinositides PI(3,5)P2. Hydrolyzes para-nitrophenyl phosphate and O-methylfluorescein phosphate in vitro. This Arabidopsis thaliana (Mouse-ear cress) protein is Inositol diphosphatase DSP3.